A 188-amino-acid chain; its full sequence is Holliday junction branch migration complex subunit RuvA (188 aa).

Residues 1 to 63 (MIEIIEGIYK…QEDMTIYGFD (63 aa)) are domain I. The domain II stretch occupies residues 64–142 (SKVKKETFEK…VVEVNEEMLE (79 aa)). Position 142 (glutamate 142) is a region of interest, flexible linker. A domain III region spans residues 142–188 (EAIEALVSLGYSKTQARNAVSKVLKESPNISNVSKIIKEALKILAKI).

This sequence belongs to the RuvA family. In terms of assembly, homotetramer. Forms an RuvA(8)-RuvB(12)-Holliday junction (HJ) complex. HJ DNA is sandwiched between 2 RuvA tetramers; dsDNA enters through RuvA and exits via RuvB. An RuvB hexamer assembles on each DNA strand where it exits the tetramer. Each RuvB hexamer is contacted by two RuvA subunits (via domain III) on 2 adjacent RuvB subunits; this complex drives branch migration. In the full resolvosome a probable DNA-RuvA(4)-RuvB(12)-RuvC(2) complex forms which resolves the HJ.

The protein resides in the cytoplasm. Its function is as follows. The RuvA-RuvB-RuvC complex processes Holliday junction (HJ) DNA during genetic recombination and DNA repair, while the RuvA-RuvB complex plays an important role in the rescue of blocked DNA replication forks via replication fork reversal (RFR). RuvA specifically binds to HJ cruciform DNA, conferring on it an open structure. The RuvB hexamer acts as an ATP-dependent pump, pulling dsDNA into and through the RuvAB complex. HJ branch migration allows RuvC to scan DNA until it finds its consensus sequence, where it cleaves and resolves the cruciform DNA. The polypeptide is Holliday junction branch migration complex subunit RuvA (Fervidobacterium nodosum (strain ATCC 35602 / DSM 5306 / Rt17-B1)).